Consider the following 518-residue polypeptide: Wax ester synthase/diacylglycerol acyltransferase 6 (518 aa).

The segment covering 1–17 (MEIKTRRDTSETSVRKD) has biased composition (basic and acidic residues). Positions 1–29 (MEIKTRRDTSETSVRKDDEEEVEEEQPLS) are disordered. Over 1–213 (MEIKTRRDTS…LMAGSRGDSR (213 aa)) the chain is Cytoplasmic. The Proton acceptor role is filled by His-163. Residues 185–205 (PDELPSLPNQNRSSSRSSRLM) form a disordered region. A helical membrane pass occupies residues 214–234 (FLWLVMVIWSAIMLVLNTVCD). Residues 235–518 (ALEFIATTMF…VQERDSRSLD (284 aa)) are Lumenal-facing. Asn-430 carries N-linked (GlcNAc...) asparagine glycosylation.

In the N-terminal section; belongs to the long-chain O-acyltransferase family. As to expression, expressed in roots, stems, leaves, flowers and siliques.

It is found in the cell membrane. The protein resides in the endoplasmic reticulum membrane. Its subcellular location is the golgi apparatus membrane. The catalysed reaction is an acyl-CoA + a 1,2-diacyl-sn-glycerol = a triacyl-sn-glycerol + CoA. The enzyme catalyses a long chain fatty alcohol + a fatty acyl-CoA = a wax ester + CoA. Its pathway is glycerolipid metabolism; triacylglycerol biosynthesis. The protein operates within lipid metabolism. Functionally, bifunctional wax ester synthase/diacylglycerol acyltransferase that uses acyl-CoAs with 16, 18 and 20 carbons as substrates, preferably in combination with 16:0ol alcohol. Involved in cuticular wax biosynthesis. This chain is Wax ester synthase/diacylglycerol acyltransferase 6, found in Arabidopsis thaliana (Mouse-ear cress).